Here is an 88-residue protein sequence, read N- to C-terminus: Cell division topological specificity factor (88 aa).

It belongs to the MinE family.

Its function is as follows. Prevents the cell division inhibition by proteins MinC and MinD at internal division sites while permitting inhibition at polar sites. This ensures cell division at the proper site by restricting the formation of a division septum at the midpoint of the long axis of the cell. This chain is Cell division topological specificity factor, found in Methylibium petroleiphilum (strain ATCC BAA-1232 / LMG 22953 / PM1).